A 1404-amino-acid chain; its full sequence is Proteoglycan 4 (1404 aa).

Positions methionine 1 to serine 24 are cleaved as a signal peptide. SMB domains are found at residues aspartate 26 to serine 69 and alanine 66 to histidine 108. 14 disulfide bridges follow: cysteine 30–cysteine 34, cysteine 30–cysteine 46, cysteine 34–cysteine 64, cysteine 44–cysteine 46, cysteine 44–cysteine 57, cysteine 50–cysteine 56, cysteine 57–cysteine 64, cysteine 70–cysteine 74, cysteine 70–cysteine 86, cysteine 74–cysteine 104, cysteine 84–cysteine 86, cysteine 84–cysteine 97, cysteine 90–cysteine 96, and cysteine 97–cysteine 104. Residues threonine 111–glutamine 966 are disordered. Residues serine 123 and serine 136 are each glycosylated (O-linked (GalNAc...) serine). The segment covering threonine 132–lysine 146 has biased composition (basic residues). Residues serine 166–serine 177 are compositionally biased toward low complexity. Residues glutamate 193 to lysine 205 show a composition bias toward basic and acidic residues. A glycan (N-linked (GlcNAc...) asparagine) is linked at asparagine 206. The segment covering threonine 235–isoleucine 252 has biased composition (polar residues). Threonine 240 and threonine 253 each carry an O-linked (GalNAc...) threonine glycan. The segment covering proline 266–leucine 276 has biased composition (polar residues). Residues threonine 277, threonine 291, and threonine 305 are each glycosylated (O-linked (GalNAc...) threonine). Serine 306 carries O-linked (GalNAc...) serine glycosylation. The O-linked (GalNAc...) threonine glycan is linked to threonine 310. A glycan (O-linked (GalNAc...) serine) is linked at serine 317. O-linked (GalNAc...) threonine glycans are attached at residues threonine 324, threonine 332, and threonine 338. Composition is skewed to low complexity over residues alanine 329–lysine 348 and lysine 356–alanine 405. Repeat unit 1 spans residues lysine 348 to proline 355. The interval lysine 348–serine 855 is 59 X 8 AA repeats of K-X-P-X-P-T-T-X. Residues lysine 356–proline 363 form a 2; approximate repeat. Repeat 3 spans residues lysine 364–isoleucine 371. Residue threonine 367 is glycosylated (O-linked (GalNAc...) threonine). The stretch at lysine 372–proline 378 is one 4; approximate repeat. Serine 373 carries O-linked (GalNAc...) serine glycosylation. Residues threonine 376, threonine 384, and threonine 385 are each glycosylated (O-linked (GalNAc...) threonine). Repeat unit 5 spans residues lysine 379–threonine 386. The stretch at lysine 387 to proline 393 is one 6; approximate repeat. Serine 388 is a glycosylation site (O-linked (GalNAc...) serine). Threonine 391, threonine 399, threonine 400, threonine 407, threonine 408, threonine 415, and threonine 423 each carry an O-linked (GalNAc...) threonine glycan. Tandem repeats lie at residues lysine 394–threonine 401, lysine 402–proline 409, lysine 410–threonine 417, and lysine 418–threonine 425. Residues alanine 413–threonine 431 show a composition bias toward low complexity. One copy of the 11; approximate repeat lies at lysine 426–proline 432. A glycan (O-linked (GalNAc...) serine) is linked at serine 427. Residues threonine 430, threonine 438, threonine 439, threonine 446, threonine 447, threonine 454, and threonine 455 are each glycosylated (O-linked (GalNAc...) threonine). 2 stretches are compositionally biased toward pro residues: residues proline 432 to proline 467 and proline 476 to proline 506. 4 repeat units span residues lysine 433–proline 440, lysine 441–proline 448, lysine 449–proline 456, and lysine 457–proline 464. The 16; approximate repeat unit spans residues lysine 465–threonine 471. Repeat 17 spans residues lysine 472–proline 479. 8 O-linked (GalNAc...) threonine glycosylation sites follow: threonine 477, threonine 478, threonine 485, threonine 493, threonine 494, threonine 501, threonine 502, and threonine 509. One copy of the 18; approximate repeat lies at lysine 480–proline 487. The 19; approximate repeat unit spans residues lysine 488–proline 495. Tandem repeats lie at residues lysine 496–proline 503, lysine 504–threonine 511, lysine 512–proline 519, and lysine 520–threonine 527. Positions alanine 523–alanine 561 are enriched in low complexity. Residue threonine 525 is glycosylated (O-linked (GalNAc...) threonine). The 24; approximate repeat unit spans residues lysine 528–threonine 534. Residue serine 529 is glycosylated (O-linked (GalNAc...) serine). O-linked (GalNAc...) threonine glycans are attached at residues threonine 532, threonine 540, and threonine 541. Residues lysine 535–threonine 542 form repeat 25. One copy of the 26; approximate repeat lies at lysine 543–proline 549. 6 repeat units span residues lysine 550–threonine 557, lysine 558–proline 565, lysine 566–proline 573, lysine 574–proline 581, lysine 582–proline 589, and lysine 590–threonine 597. Serine 553 carries an O-linked (GalNAc...) serine glycan. 17 O-linked (GalNAc...) threonine glycosylation sites follow: threonine 555, threonine 563, threonine 564, threonine 571, threonine 572, threonine 579, threonine 580, threonine 587, threonine 588, threonine 595, threonine 603, threonine 604, threonine 611, threonine 612, threonine 616, threonine 619, and threonine 627. Residues proline 562 to proline 592 are compositionally biased toward pro residues. Residues lysine 598–proline 605 form a 33; approximate repeat. Residues proline 602 to threonine 611 show a composition bias toward pro residues. Residues lysine 606–proline 613 form repeat 34. Positions threonine 612–threonine 636 are enriched in low complexity. One copy of the 35; approximate repeat lies at lysine 614 to proline 621. The stretch at lysine 622 to proline 629 is one 36; approximate repeat. The stretch at glutamate 638–proline 645 is one 37; approximate repeat. Positions proline 653–threonine 667 are enriched in pro residues. Residues glutamate 662–proline 669 form a 38; approximate repeat. 9 O-linked (GalNAc...) threonine glycosylation sites follow: threonine 676, threonine 683, threonine 684, threonine 691, threonine 692, threonine 699, threonine 700, threonine 704, and threonine 707. Pro residues predominate over residues proline 677–threonine 699. Tandem repeats lie at residues lysine 678–proline 685, lysine 686–proline 693, and lysine 694–proline 701. A compositionally biased stretch (low complexity) spans threonine 700–alanine 721. The stretch at lysine 702 to proline 709 is one 42; approximate repeat. The 43; approximate repeat unit spans residues lysine 710 to leucine 717. Copy 44 of the repeat occupies lysine 718–proline 725. Residues threonine 723, threonine 724, and threonine 736 are each glycosylated (O-linked (GalNAc...) threonine). Over residues proline 728 to threonine 761 the composition is skewed to low complexity. A 45; approximate repeat occupies lysine 731 to threonine 738. A 46; approximate repeat occupies lysine 739–serine 746. The 47; approximate repeat unit spans residues aspartate 747–proline 754. Residues lysine 755–proline 762 form a 48; approximate repeat. Positions proline 762–threonine 776 are enriched in pro residues. 2 consecutive repeat copies span residues lysine 763 to proline 770 and lysine 771 to proline 778. Threonine 768, threonine 769, threonine 776, and threonine 777 each carry an O-linked (GalNAc...) threonine glycan. Residues threonine 777–alanine 790 show a composition bias toward low complexity. One copy of the 51; approximate repeat lies at lysine 779–leucine 786. Repeat 52 spans residues lysine 787–proline 794. O-linked (GalNAc...) threonine glycosylation is found at threonine 792, threonine 793, and threonine 805. Residues proline 797 to threonine 830 show a composition bias toward low complexity. The stretch at lysine 800–threonine 807 is one 53; approximate repeat. A 54; approximate repeat occupies lysine 808 to serine 815. The O-linked (GalNAc...) serine glycan is linked to serine 812. Residues aspartate 816–proline 823 form a 55; approximate repeat. Residues lysine 824 to proline 831 form a 56; approximate repeat. 3 O-linked (GalNAc...) threonine glycosylation sites follow: threonine 829, threonine 837, and threonine 838. Pro residues predominate over residues proline 831–threonine 853. 2 repeat units span residues lysine 832 to proline 839 and lysine 840 to proline 847. The 59; approximate repeat unit spans residues glutamate 848–serine 855. Over residues threonine 854 to proline 866 the composition is skewed to low complexity. The O-linked (GalNAc...) serine glycan is linked to serine 892. Residues proline 899–threonine 914 show a composition bias toward low complexity. Threonine 900 carries O-linked (GalNAc...) threonine glycosylation. The segment covering alanine 915–threonine 926 has biased composition (basic and acidic residues). Residues threonine 927–glutamine 966 show a composition bias toward low complexity. Threonine 930 and threonine 931 each carry an O-linked (GalNAc...) threonine glycan. A glycan (O-linked (GalNAc...) serine) is linked at serine 962. O-linked (GalNAc...) threonine glycosylation is found at threonine 963, threonine 968, threonine 975, threonine 978, threonine 979, and threonine 980. Residues isoleucine 992 to threonine 1104 are disordered. A compositionally biased stretch (basic and acidic residues) spans asparagine 999–threonine 1012. Residues lysine 1026–lysine 1047 are compositionally biased toward basic residues. Residue threonine 1039 is glycosylated (O-linked (GalNAc...) threonine). A compositionally biased stretch (low complexity) spans threonine 1048–proline 1060. A compositionally biased stretch (polar residues) spans leucine 1073–serine 1085. Residues cysteine 1146 and cysteine 1403 are joined by a disulfide bond. 2 Hemopexin repeats span residues glycine 1148 to isoleucine 1191 and proline 1192 to leucine 1239. The N-linked (GlcNAc...) asparagine glycan is linked to asparagine 1159. O-linked (GalNAc...) threonine glycosylation is present at threonine 1161.

As to quaternary structure, homodimer; disulfide-linked. Post-translationally, N-glycosylated. O-glycosylated; contains glycosaminoglycan chondroitin sulfate and keratan sulfate. O-glycosylated with sialylated oligosaccharides which are predominantly represented by the monosialylated core type I structure, NeuNAcalpha2-3Galbeta1-3GalNAc, with smaller amounts of disialylated O-glycans. In terms of processing, the disulfide bond between Cys-1146 and Cys-1403 is essential for protein cleavage. Post-translationally, proteolytically cleaved by cathepsin CTSG. In terms of tissue distribution, highly expressed in synovial tissue, cartilage and liver and weakly in heart and lung. Isoform B is expressed in kidney, lung, liver, heart and brain. Isoform C and isoform D are widely expressed.

Its subcellular location is the secreted. Its function is as follows. Plays a role in boundary lubrication within articulating joints. Prevents protein deposition onto cartilage from synovial fluid by controlling adhesion-dependent synovial growth and inhibiting the adhesion of synovial cells to the cartilage surface. Isoform F plays a role as a growth factor acting on the primitive cells of both hematopoietic and endothelial cell lineages. This is Proteoglycan 4 (PRG4) from Homo sapiens (Human).